Here is a 473-residue protein sequence, read N- to C-terminus: Major myo-inositol transporter IolT (473 aa).

12 helical membrane passes run 14 to 34, 49 to 69, 83 to 103, 111 to 131, 146 to 166, 172 to 192, 256 to 276, 295 to 315, 325 to 345, 350 to 370, 389 to 409, and 411 to 431; these read IILV…VLNG, AFTE…GAVF, ILFL…APNV, FVLG…LAEM, LMIV…GTTM, VWRF…FGMI, IVFI…NSIM, IGNI…IWLL, MTGL…SLVL, ALPY…QGAI, LGMG…SFTF, and ILLA…LGIC.

This sequence belongs to the major facilitator superfamily. Sugar transporter (TC 2.A.1.1) family.

The protein localises to the cell membrane. It participates in polyol metabolism; myo-inositol degradation into acetyl-CoA. Functionally, major myo-inositol uptake transporter. The protein is Major myo-inositol transporter IolT (iolT) of Bacillus subtilis (strain 168).